Here is a 177-residue protein sequence, read N- to C-terminus: Shikimate kinase (177 aa).

14–19 (GSGKST) serves as a coordination point for ATP. Ser18 is a binding site for Mg(2+). The substrate site is built by Asp36, Arg60, and Gly82. Arg120 contributes to the ATP binding site. Residue Arg139 participates in substrate binding.

The protein belongs to the shikimate kinase family. As to quaternary structure, monomer. Requires Mg(2+) as cofactor.

It localises to the cytoplasm. The catalysed reaction is shikimate + ATP = 3-phosphoshikimate + ADP + H(+). It functions in the pathway metabolic intermediate biosynthesis; chorismate biosynthesis; chorismate from D-erythrose 4-phosphate and phosphoenolpyruvate: step 5/7. Functionally, catalyzes the specific phosphorylation of the 3-hydroxyl group of shikimic acid using ATP as a cosubstrate. This is Shikimate kinase from Gloeobacter violaceus (strain ATCC 29082 / PCC 7421).